A 310-amino-acid chain; its full sequence is Tyrosine recombinase XerC (310 aa).

A Core-binding (CB) domain is found at 11 to 97; it reads NSLQKPLERF…SLRSFFDFLI (87 aa). The region spanning 118–298 is the Tyr recombinase domain; it reads PLPKNLDVDE…DFQHLAQAYD (181 aa). Active-site residues include Arg-157, Lys-181, His-250, Arg-253, and His-276. Tyr-285 (O-(3'-phospho-DNA)-tyrosine intermediate) is an active-site residue.

It belongs to the 'phage' integrase family. XerC subfamily. As to quaternary structure, forms a cyclic heterotetrameric complex composed of two molecules of XerC and two molecules of XerD.

The protein localises to the cytoplasm. In terms of biological role, site-specific tyrosine recombinase, which acts by catalyzing the cutting and rejoining of the recombining DNA molecules. The XerC-XerD complex is essential to convert dimers of the bacterial chromosome into monomers to permit their segregation at cell division. It also contributes to the segregational stability of plasmids. This Vibrio parahaemolyticus serotype O3:K6 (strain RIMD 2210633) protein is Tyrosine recombinase XerC.